Consider the following 457-residue polypeptide: Siroheme synthase (457 aa).

Positions 1 to 204 (MDHLPIFCQL…NDQKAITETT (204 aa)) are precorrin-2 dehydrogenase /sirohydrochlorin ferrochelatase. Residues 22–23 (DV) and 43–44 (LA) contribute to the NAD(+) site. Ser128 is modified (phosphoserine). The interval 216–457 (GEVVLVGAGP…RDKLNWFSNH (242 aa)) is uroporphyrinogen-III C-methyltransferase. Pro225 contacts S-adenosyl-L-methionine. Residue Asp248 is the Proton acceptor of the active site. Catalysis depends on Lys270, which acts as the Proton donor. S-adenosyl-L-methionine contacts are provided by residues 301-303 (GGD), Ile306, 331-332 (TA), Met382, and Gly411.

In the N-terminal section; belongs to the precorrin-2 dehydrogenase / sirohydrochlorin ferrochelatase family. This sequence in the C-terminal section; belongs to the precorrin methyltransferase family.

It catalyses the reaction uroporphyrinogen III + 2 S-adenosyl-L-methionine = precorrin-2 + 2 S-adenosyl-L-homocysteine + H(+). The enzyme catalyses precorrin-2 + NAD(+) = sirohydrochlorin + NADH + 2 H(+). It carries out the reaction siroheme + 2 H(+) = sirohydrochlorin + Fe(2+). The protein operates within cofactor biosynthesis; adenosylcobalamin biosynthesis; precorrin-2 from uroporphyrinogen III: step 1/1. It functions in the pathway cofactor biosynthesis; adenosylcobalamin biosynthesis; sirohydrochlorin from precorrin-2: step 1/1. It participates in porphyrin-containing compound metabolism; siroheme biosynthesis; precorrin-2 from uroporphyrinogen III: step 1/1. Its pathway is porphyrin-containing compound metabolism; siroheme biosynthesis; siroheme from sirohydrochlorin: step 1/1. The protein operates within porphyrin-containing compound metabolism; siroheme biosynthesis; sirohydrochlorin from precorrin-2: step 1/1. In terms of biological role, multifunctional enzyme that catalyzes the SAM-dependent methylations of uroporphyrinogen III at position C-2 and C-7 to form precorrin-2 via precorrin-1. Then it catalyzes the NAD-dependent ring dehydrogenation of precorrin-2 to yield sirohydrochlorin. Finally, it catalyzes the ferrochelation of sirohydrochlorin to yield siroheme. This is Siroheme synthase from Escherichia coli O6:K15:H31 (strain 536 / UPEC).